A 396-amino-acid chain; its full sequence is Probable porphobilinogen deaminase (396 aa).

The tract at residues 159 to 224 (APALHREHER…DTASSSEFEQ (66 aa)) is disordered. The tract at residues 159-245 (APALHREHER…LQQSAMERDP (87 aa)) is insert. Residues 162–189 (LHREHERRTEAEKEAQSRDAREQRRGDY) are compositionally biased toward basic and acidic residues. Residues 200–215 (LDTEDGEEGAADDGDD) show a composition bias toward acidic residues. Cysteine 328 is subject to S-(dipyrrolylmethanemethyl)cysteine.

This sequence belongs to the HMBS family. It depends on dipyrromethane as a cofactor.

The catalysed reaction is 4 porphobilinogen + H2O = hydroxymethylbilane + 4 NH4(+). It functions in the pathway porphyrin-containing compound metabolism; protoporphyrin-IX biosynthesis; coproporphyrinogen-III from 5-aminolevulinate: step 2/4. Its function is as follows. Tetrapolymerization of the monopyrrole PBG into the hydroxymethylbilane pre-uroporphyrinogen in several discrete steps. This Halobacterium salinarum (strain ATCC 700922 / JCM 11081 / NRC-1) (Halobacterium halobium) protein is Probable porphobilinogen deaminase (hemC).